We begin with the raw amino-acid sequence, 394 residues long: Elongation factor Tu-A (394 aa).

The region spanning 10–204 (KPHVNVGTIG…ALDTYIPEPE (195 aa)) is the tr-type G domain. The G1 stretch occupies residues 19-26 (GHVDHGKT). A GTP-binding site is contributed by 19–26 (GHVDHGKT). Thr26 contacts Mg(2+). Residues 60–64 (GITIN) are G2. A G3 region spans residues 81–84 (DCPG). Residues 81–85 (DCPGH) and 136–139 (NKCD) contribute to the GTP site. A G4 region spans residues 136 to 139 (NKCD). Residues 174 to 176 (SAL) form a G5 region.

Belongs to the TRAFAC class translation factor GTPase superfamily. Classic translation factor GTPase family. EF-Tu/EF-1A subfamily. As to quaternary structure, monomer.

The protein resides in the cytoplasm. The enzyme catalyses GTP + H2O = GDP + phosphate + H(+). Its function is as follows. GTP hydrolase that promotes the GTP-dependent binding of aminoacyl-tRNA to the A-site of ribosomes during protein biosynthesis. This chain is Elongation factor Tu-A, found in Vibrio cholerae serotype O1 (strain ATCC 39315 / El Tor Inaba N16961).